Reading from the N-terminus, the 136-residue chain is Putative pre-16S rRNA nuclease (136 aa).

Belongs to the YqgF nuclease family.

It is found in the cytoplasm. Functionally, could be a nuclease involved in processing of the 5'-end of pre-16S rRNA. This Francisella philomiragia subsp. philomiragia (strain ATCC 25017 / CCUG 19701 / FSC 153 / O#319-036) protein is Putative pre-16S rRNA nuclease.